Consider the following 136-residue polypeptide: Large ribosomal subunit protein uL16 (136 aa).

It belongs to the universal ribosomal protein uL16 family. In terms of assembly, part of the 50S ribosomal subunit.

Functionally, binds 23S rRNA and is also seen to make contacts with the A and possibly P site tRNAs. This Yersinia enterocolitica serotype O:8 / biotype 1B (strain NCTC 13174 / 8081) protein is Large ribosomal subunit protein uL16.